A 98-amino-acid polypeptide reads, in one-letter code: NADH-ubiquinone oxidoreductase chain 4L (98 aa).

Transmembrane regions (helical) follow at residues 29–49 (SLLC…LLIL) and 61–81 (ILLL…LVTV).

It belongs to the complex I subunit 4L family. In terms of assembly, core subunit of respiratory chain NADH dehydrogenase (Complex I) which is composed of 45 different subunits.

It localises to the mitochondrion inner membrane. It catalyses the reaction a ubiquinone + NADH + 5 H(+)(in) = a ubiquinol + NAD(+) + 4 H(+)(out). In terms of biological role, core subunit of the mitochondrial membrane respiratory chain NADH dehydrogenase (Complex I) which catalyzes electron transfer from NADH through the respiratory chain, using ubiquinone as an electron acceptor. Part of the enzyme membrane arm which is embedded in the lipid bilayer and involved in proton translocation. The polypeptide is NADH-ubiquinone oxidoreductase chain 4L (MT-ND4L) (Cheirogaleus medius (Fat-tailed dwarf lemur)).